Reading from the N-terminus, the 128-residue chain is Diacylglycerol kinase (128 aa).

Glu-34 serves as a coordination point for a divalent metal cation. Transmembrane regions (helical) follow at residues 35-55 (SAFR…SYLA) and 58-78 (FLEW…ELIN). Residue Glu-75 is the Proton acceptor of the active site. Glu-82 lines the a divalent metal cation pocket. A helical transmembrane segment spans residues 107–127 (QLIGLIFWTLIWGRYLLALYL).

The protein belongs to the bacterial diacylglycerol kinase family. Mg(2+) is required as a cofactor.

Its subcellular location is the cell inner membrane. It carries out the reaction a 1,2-diacyl-sn-glycerol + ATP = a 1,2-diacyl-sn-glycero-3-phosphate + ADP + H(+). Its function is as follows. Catalyzes the ATP-dependent phosphorylation of sn-l,2-diacylglycerol (DAG) to phosphatidic acid. Involved in the recycling of diacylglycerol produced as a by-product during membrane-derived oligosaccharide (MDO) biosynthesis. This chain is Diacylglycerol kinase (dgkA), found in Helicobacter pylori (strain ATCC 700392 / 26695) (Campylobacter pylori).